The following is a 318-amino-acid chain: ADP-L-glycero-D-manno-heptose-6-epimerase (318 aa).

NADP(+) contacts are provided by residues 10–11 (FI), 31–32 (DD), Lys38, Lys53, and 79–83 (EGACS). The Proton acceptor role is filled by Tyr144. NADP(+) is bound at residue Lys148. Substrate is bound at residue Asn173. NADP(+) contacts are provided by Val174 and Lys182. The active-site Proton acceptor is the Lys182. Residues Ser184, His191, 205 to 208 (FEGC), Arg218, and Tyr282 each bind substrate.

It belongs to the NAD(P)-dependent epimerase/dehydratase family. HldD subfamily. As to quaternary structure, homopentamer. Requires NADP(+) as cofactor.

It catalyses the reaction ADP-D-glycero-beta-D-manno-heptose = ADP-L-glycero-beta-D-manno-heptose. It functions in the pathway nucleotide-sugar biosynthesis; ADP-L-glycero-beta-D-manno-heptose biosynthesis; ADP-L-glycero-beta-D-manno-heptose from D-glycero-beta-D-manno-heptose 7-phosphate: step 4/4. Catalyzes the interconversion between ADP-D-glycero-beta-D-manno-heptose and ADP-L-glycero-beta-D-manno-heptose via an epimerization at carbon 6 of the heptose. This Aeromonas hydrophila subsp. hydrophila (strain ATCC 7966 / DSM 30187 / BCRC 13018 / CCUG 14551 / JCM 1027 / KCTC 2358 / NCIMB 9240 / NCTC 8049) protein is ADP-L-glycero-D-manno-heptose-6-epimerase.